A 503-amino-acid chain; its full sequence is REST corepressor 2 (503 aa).

Residues 1-62 (MPSVMEKSHG…IPECKPDNTS (62 aa)) form a disordered region. The 86-residue stretch at 41–126 (SMIRVGSDYQ…RSLADLANFT (86 aa)) folds into the ELM2 domain. In terms of domain architecture, SANT 1 spans 127 to 178 (PFPEEWSVEDKVLFEQAFSFHGKSFQRIQQMLPEKLIPSLVKYYYSWKKTRS). Coiled-coil stretches lie at residues 182–206 (VMDRQARRLQAKREEGMEEVEDQIK) and 286–314 (QLETQLISLKRQVQNIKQMNSSLKESLEG). In terms of domain architecture, SANT 2 spans 327–378 (KLNARWTTDEQLLAVQAVRKYGKDFQAISEVLGNKTPSQVKTFFISYRRRFN). The disordered stretch occupies residues 385 to 503 (EWEAEQEPSP…VGSHAESTFS (119 aa)). Residues 399-412 (TDMSNKTSGSSQTP) show a composition bias toward polar residues. Positions 423–442 (SVSSSSQPAPPAAAAAASLS) are enriched in low complexity.

This sequence belongs to the CoREST family.

It is found in the nucleus. Its function is as follows. May act as a component of a corepressor complex that represses transcription. The polypeptide is REST corepressor 2 (rcor2) (Xenopus laevis (African clawed frog)).